A 143-amino-acid polypeptide reads, in one-letter code: Large ribosomal subunit protein uL16 (143 aa).

This sequence belongs to the universal ribosomal protein uL16 family. As to quaternary structure, part of the 50S ribosomal subunit.

Its function is as follows. Binds 23S rRNA and is also seen to make contacts with the A and possibly P site tRNAs. The chain is Large ribosomal subunit protein uL16 from Oenococcus oeni (strain ATCC BAA-331 / PSU-1).